The primary structure comprises 148 residues: 3-dehydroquinate dehydratase (148 aa).

Tyr-23 functions as the Proton acceptor in the catalytic mechanism. 3 residues coordinate substrate: Asn-75, His-81, and Asp-88. The Proton donor role is filled by His-101. Residues 102 to 103 (MS) and Arg-112 each bind substrate.

It belongs to the type-II 3-dehydroquinase family. Homododecamer.

The enzyme catalyses 3-dehydroquinate = 3-dehydroshikimate + H2O. Its pathway is metabolic intermediate biosynthesis; chorismate biosynthesis; chorismate from D-erythrose 4-phosphate and phosphoenolpyruvate: step 3/7. In terms of biological role, catalyzes a trans-dehydration via an enolate intermediate. The protein is 3-dehydroquinate dehydratase of Syntrophotalea carbinolica (strain DSM 2380 / NBRC 103641 / GraBd1) (Pelobacter carbinolicus).